We begin with the raw amino-acid sequence, 333 residues long: Fructose-1,6-bisphosphatase class 1 (333 aa).

Residues glutamate 92, aspartate 113, leucine 115, and aspartate 116 each contribute to the Mg(2+) site. Substrate-binding positions include 116–119 (DGSS), asparagine 209, tyrosine 242, and lysine 272. Glutamate 278 serves as a coordination point for Mg(2+).

It belongs to the FBPase class 1 family. In terms of assembly, homotetramer. Mg(2+) is required as a cofactor.

It localises to the cytoplasm. It catalyses the reaction beta-D-fructose 1,6-bisphosphate + H2O = beta-D-fructose 6-phosphate + phosphate. It participates in carbohydrate biosynthesis; Calvin cycle. The chain is Fructose-1,6-bisphosphatase class 1 from Pelodictyon phaeoclathratiforme (strain DSM 5477 / BU-1).